The following is a 507-amino-acid chain: Hippocampus abundant transcript-like protein 1 (507 aa).

The segment at 1–27 (MSTDGESPEEPRWKAVASPKASTMPEK) is disordered. The Extracellular segment spans residues 1–51 (MSTDGESPEEPRWKAVASPKASTMPEKRGSAQAASGSWLQGFGHPSVYHAA). Residues 52 to 72 (FVIFLEFFAWGLLTTPMLTVL) form a helical membrane-spanning segment. Residues 73-84 (HETFPQHTFLMN) are Cytoplasmic-facing. Residues 85-105 (GLIQGVKGLLSFLSAPLIGAL) form a helical membrane-spanning segment. Over 106 to 113 (SDVWGRKP) the chain is Extracellular. A helical membrane pass occupies residues 114 to 134 (FLLGTVFFTCFPIPLMRINPW). The Cytoplasmic portion of the chain corresponds to 135-136 (WY). The chain crosses the membrane as a helical span at residues 137-157 (FGMISVSGVFSVTFSVIFAYV). Topologically, residues 158–170 (ADFTQEHERSTAY) are extracellular. The helical transmembrane segment at 171–191 (GWVSATFAASLVSSPAIGTYL) threads the bilayer. Over 192–198 (SANYGDS) the chain is Cytoplasmic. A helical membrane pass occupies residues 199–219 (LVVLVATLVALLDICFILIAV). Residues 220–257 (PESLSEKIRPASWGAQISWKQADPFASLKKVGKDSTVL) are Extracellular-facing. Residues 258–278 (LICITVFLSYLPEAGQYSSFF) form a helical membrane-spanning segment. Topologically, residues 279 to 283 (LYLRQ) are cytoplasmic. The helical transmembrane segment at 284-304 (VIGFGSVKIVAFIAMVGILSI) threads the bilayer. At 305 to 323 (VAQTVFLSKLMRSLGNKNT) the chain is on the extracellular side. Residues 324 to 344 (VLLGLGFQMLQLAWYGFGSQA) traverse the membrane as a helical segment. The Cytoplasmic portion of the chain corresponds to 345 to 347 (WMM). A helical transmembrane segment spans residues 348 to 368 (WAAGTVAAMSSITFPAVSALI). Over 369 to 389 (SRNAESDQQGVAQGIVTGIRG) the chain is Extracellular. The helical transmembrane segment at 390 to 410 (LCNGLGPALYGFIFYMFHVEL) threads the bilayer. Residues 411–430 (SELGPKLNSDDDPLQGAFIP) are Cytoplasmic-facing. A helical membrane pass occupies residues 431 to 451 (GPPFLFGACIVLMSFLVALFI). Residues 452–507 (PEYRKTSGVQKHNNSTSGSLSTPPERGSDEDIEPLLQDSSIWELSFEEPGNQCTEL) are Extracellular-facing. Residues 459–473 (GVQKHNNSTSGSLST) show a composition bias toward polar residues. Residues 459-483 (GVQKHNNSTSGSLSTPPERGSDEDI) form a disordered region. 2 N-linked (GlcNAc...) asparagine glycosylation sites follow: Asn464 and Asn465.

This sequence belongs to the major facilitator superfamily.

The protein localises to the membrane. The chain is Hippocampus abundant transcript-like protein 1 from Mus musculus (Mouse).